Consider the following 688-residue polypeptide: Nucleolar protein 10 (688 aa).

Met-1 is subject to N-acetylmethionine. Residue Ser-25 is modified to Phosphoserine. WD repeat units lie at residues 44-82 (ELIQ…CYDT), 88-124 (KFER…FHSQ), 127-163 (FYYK…RLNL), 170-205 (NPLQ…CWDP), 219-258 (NSVT…LYDL), 262-300 (KPLL…MWNK), and 304-341 (KIFT…IYYI). The stretch at 423-446 (EYRKDKIRQKIEETRAQRVQLKKL) forms a coiled coil. Residue Ser-475 is modified to Phosphoserine. The residue at position 481 (Thr-481) is a Phosphothreonine. The residue at position 514 (Ser-514) is a Phosphoserine. Coiled-coil stretches lie at residues 514–589 (SEKR…TVLK) and 640–673 (SKQL…LRRS). Disordered stretches follow at residues 529–557 (LREK…EKAW) and 645–688 (FTLK…RSFH). Positions 648–663 (KRSEQQKKQQEAEKLH) are enriched in basic and acidic residues. Basic residues predominate over residues 664–688 (RQERKRLRRSAGHLKSRHKRGRSFH).

This sequence belongs to the WD repeat NOL10/ENP2 family.

The protein resides in the nucleus. The protein localises to the nucleolus. This chain is Nucleolar protein 10 (NOL10), found in Homo sapiens (Human).